The primary structure comprises 436 residues: Tol-Pal system protein TolB (436 aa).

An N-terminal signal peptide occupies residues 1-19 (MVKCSLIRALMVVAGLVGA).

This sequence belongs to the TolB family. In terms of assembly, the Tol-Pal system is composed of five core proteins: the inner membrane proteins TolA, TolQ and TolR, the periplasmic protein TolB and the outer membrane protein Pal. They form a network linking the inner and outer membranes and the peptidoglycan layer.

Its subcellular location is the periplasm. In terms of biological role, part of the Tol-Pal system, which plays a role in outer membrane invagination during cell division and is important for maintaining outer membrane integrity. The protein is Tol-Pal system protein TolB of Rhizobium etli (strain ATCC 51251 / DSM 11541 / JCM 21823 / NBRC 15573 / CFN 42).